We begin with the raw amino-acid sequence, 248 residues long: uncharacterized protein (248 aa).

This is an uncharacterized protein from Streptococcus pyogenes serotype M6 (strain ATCC BAA-946 / MGAS10394).